The sequence spans 456 residues: Ribosome assembly protein METTL17, mitochondrial (456 aa).

The N-terminal 19 residues, 1–19 (MAAALKCLLTLGRWCPGLG), are a transit peptide targeting the mitochondrion. The [4Fe-4S] cluster site is built by Cys-333, Cys-339, Cys-347, and Cys-404.

Belongs to the methyltransferase superfamily. Rsm22 family. As to quaternary structure, associates with the mitochondrial ribosome (mitoribosome).

The protein resides in the mitochondrion matrix. Functionally, mitochondrial ribosome (mitoribosome) assembly factor. Binds at the interface of the head and body domains of the mitochondrial small ribosomal subunit (mt-SSU), occluding the mRNA channel and preventing compaction of the head domain towards the body. Probable inactive methyltransferase: retains the characteristic folding and ability to bind S-adenosyl-L-methionine, but it probably lost its methyltransferase activity. The chain is Ribosome assembly protein METTL17, mitochondrial from Homo sapiens (Human).